The primary structure comprises 583 residues: 15-cis-phytoene desaturase, chloroplastic/chromoplastic (583 aa).

A chloroplast and chromoplast-targeting transit peptide spans 1–111; the sequence is MPQIGLVSAV…FRASPRPTKP (111 aa). Residues 118 to 134, 141 to 142, Lys149, 166 to 167, and Tyr172 each bind FAD; these read GAGL…ADAG, EA, and HI. Arg307 is a substrate binding site. Residues Ile349 and Asp538 each contribute to the FAD site. Ala546 contacts substrate. Residue Met548 coordinates FAD.

The protein belongs to the carotenoid/retinoid oxidoreductase family. In terms of assembly, homotetramer. Requires FAD as cofactor.

It is found in the plastid. It localises to the chloroplast. Its subcellular location is the chromoplast. The protein localises to the membrane. The catalysed reaction is 2 a plastoquinone + 15-cis-phytoene = 9,9',15-tri-cis-zeta-carotene + 2 a plastoquinol. It functions in the pathway carotenoid biosynthesis; lycopene biosynthesis. Functionally, converts phytoene into zeta-carotene via the intermediary of phytofluene by the symmetrical introduction of two double bonds at the C-11 and C-11' positions of phytoene with a concomitant isomerization of two neighboring double bonds at the C9 and C9' positions from trans to cis. In Solanum lycopersicum (Tomato), this protein is 15-cis-phytoene desaturase, chloroplastic/chromoplastic (PDS).